Consider the following 1622-residue polypeptide: DNA (cytosine-5)-methyltransferase 1 (1622 aa).

An interaction with DNMT3A region spans residues 1–145 (MPARTAPARV…RRSKSDSETM (145 aa)). Interaction with the PRC2/EED-EZH2 complex regions lie at residues 1–342 (MPAR…VERK) and 304–610 (TPEP…TVIN). Ser-15 carries the post-translational modification Phosphoserine. Residues 16 to 109 (PAGSLPDHVR…TQKANGCPAN (94 aa)) form the DMAP1-binding domain. Lys-70 bears the N6,N6-dimethyllysine; by EHMT2 mark. Residues 100-360 (TQKANGCPAN…IPKLNPPQCP (261 aa)) form a disordered region. The segment covering 126–137 (PRSRPKPRGPRR) has biased composition (basic residues). A Phosphoserine modification is found at Ser-138. Lys-139 carries the N6-methyllysine; by SETD7 modification. Ser-140 bears the Phosphoserine; by PKB/AKT1 mark. The interval 146–213 (IEASSSSVAT…TESRASRAGE (68 aa)) is interaction with DNMT3B. 2 positions are modified to phosphoserine: Ser-149 and Ser-151. Positions 149–166 (SSSSVATRRTTRQTTITS) are enriched in low complexity. A Phosphothreonine modification is found at Thr-163. Lys-169 carries the post-translational modification N6-acetyllysine. Positions 173–200 (KRKPKEDSEKGNANESAAEERDQDKKRR) match the Nuclear localization signal motif. Composition is skewed to basic and acidic residues over residues 176–197 (PKED…DQDK), 207–222 (RASR…ERVR), 237–269 (DDRR…THLD), and 276–300 (KDKR…KEEV). Thr-304 is modified (phosphothreonine). Residues 327-556 (KPEPLSIPVQ…NVNRFTEDSL (230 aa)) are DNA replication foci-targeting sequence. Residues Cys-359 and Cys-362 each contribute to the Zn(2+) site. Lys-372 bears the N6-acetyllysine mark. Ser-400 carries the post-translational modification Phosphoserine. 2 residues coordinate Zn(2+): Cys-420 and His-424. Residues Ser-515 and Ser-555 each carry the phosphoserine modification. Residues 650-696 (NTMKRRRCGVCEVCQQPECGKCKACKDMVKFGGTGRSKQACLKRRCP) form a CXXC-type zinc finger. 8 residues coordinate Zn(2+): Cys-657, Cys-660, Cys-663, Cys-668, Cys-671, Cys-674, Cys-690, and Cys-695. The segment at 697 to 758 (NLAVKEADED…TYYWKVSIDE (62 aa)) is autoinhibitory linker. A disordered region spans residues 702–733 (EADEDEEADDDIPELPSPKKLHQGKKKKQNKD). Positions 703-714 (ADEDEEADDDIP) are enriched in acidic residues. The residue at position 718 (Ser-718) is a Phosphoserine. Over residues 720-731 (KKLHQGKKKKQN) the composition is skewed to basic residues. Ser-736 carries the post-translational modification Phosphoserine. An N6-acetyllysine modification is found at Lys-753. In terms of domain architecture, BAH 1 spans 759 to 884 (ETLEVGDCVS…QDYARFESPP (126 aa)). Phosphoserine is present on Ser-882. 3 positions are modified to N6-acetyllysine: Lys-895, Lys-961, and Lys-980. The BAH 2 domain occupies 977 to 1105 (TYRKYSDYIK…SKTKSFEDPP (129 aa)). The interval 1099 to 1138 (KSFEDPPNHARSPGNKGKGKGKGKGKGKPQVSEPKEPEAA) is disordered. 6 repeat units span residues 1114-1115 (KG), 1116-1117 (KG), 1118-1119 (KG), 1120-1121 (KG), 1122-1123 (KG), and 1124-1125 (KG). The segment at 1114-1127 (KGKGKGKGKGKGKP) is 7 X 2 AA tandem repeats of K-G. Residues 1115 to 1125 (GKGKGKGKGKG) are compositionally biased toward basic residues. N6-acetyllysine is present on residues Lys-1116, Lys-1118, Lys-1120, Lys-1122, Lys-1124, and Lys-1126. The 7; approximate repeat unit spans residues 1126 to 1127 (KP). Positions 1126–1622 (KPQVSEPKEP…KGKEETTTED (497 aa)) are interaction with the PRC2/EED-EZH2 complex. The 460-residue stretch at 1144-1603 (LRTLDVFSGC…LEIKLCLLAS (460 aa)) folds into the SAM-dependent MTase C5-type domain. Residues 1144-1622 (LRTLDVFSGC…KGKEETTTED (479 aa)) are catalytic. S-adenosyl-L-methionine-binding positions include Ser-1151, 1155-1156 (GL), 1173-1174 (EM), 1195-1196 (DC), and Cys-1196. Cys-1231 is an active-site residue. N6-acetyllysine is present on Lys-1354. A Phosphoserine modification is found at Ser-1436. Residues Asn-1582 and Val-1584 each contribute to the S-adenosyl-L-methionine site. Lys-1613 participates in a covalent cross-link: Glycyl lysine isopeptide (Lys-Gly) (interchain with G-Cter in SUMO2).

Belongs to the class I-like SAM-binding methyltransferase superfamily. C5-methyltransferase family. Homodimer. Forms a stable complex with E2F1, BB1 and HDAC1. Forms a complex with DMAP1 and HDAC2, with direct interaction. Interacts with the PRC2/EED-EZH2 complex. Probably part of a corepressor complex containing ZNF304, TRIM28, SETDB1 and DNMT1. Interacts with UHRF1; promoting its recruitment to hemimethylated DNA. Interacts with USP7, promoting its deubiquitination. Interacts with PCNA. Interacts with MBD2 and MBD3. Interacts with DNMT3A and DNMT3B. Interacts with UBC9. Interacts with CSNK1D. Interacts with HDAC1. Interacts with BAZ2A/TIP5. Interacts with SIRT7. Interacts with ZNF263; recruited to the SIX3 promoter along with other proteins involved in chromatin modification and transcriptional corepression where it contributes to transcriptional repression. Interacts with L3MBTL3 and DCAF5; the interaction requires DNMT1 methylation at Lys-139 and is necessary to target DNMT1 for ubiquitination by the CRL4-DCAF5 E3 ubiquitin ligase complex and proteasomal degradation. Interacts with PHF20L1; the interaction requires DNMT1 methylation at Lys-139 and protects DNMT1 from ubiquitination and proteasomal degradation. Post-translationally, sumoylated; sumoylation increases activity. Acetylation on multiple lysines, mainly by KAT2B/PCAF, regulates cell cycle G(2)/M transition. Deacetylation of Lys-1116 and Lys-1354 by SIRT1 increases methyltransferase activity. In terms of processing, phosphorylation of Ser-151 by CDKs is important for enzymatic activity and protein stability. Phosphorylation of Ser-140 by AKT1 prevents methylation by SETD7 thereby increasing DNMT1 stability. Post-translationally, methylation at Lys-139 by SETD7 is necessary for the regulation of DNMT1 proteasomal degradation. Ubiquitinated by UHRF1; interaction with USP7 counteracts ubiquitination by UHRF1 by promoting deubiquitination and preventing degradation by the proteasome. In terms of tissue distribution, isoforms 0 and 8 are highly expressed in placenta, brain, lung, spleen, kidney, heart, and at much lower levels in liver. Isoform 1 is expressed in cerebellum, isoform 2 in muscle and testis, isoform 3 in lung, isoform 4 in spleen and brain, and isoform 5 in brain.

The protein localises to the nucleus. The catalysed reaction is a 2'-deoxycytidine in DNA + S-adenosyl-L-methionine = a 5-methyl-2'-deoxycytidine in DNA + S-adenosyl-L-homocysteine + H(+). Functionally, methylates CpG residues. Preferentially methylates hemimethylated DNA. Associates with DNA replication sites in S phase maintaining the methylation pattern in the newly synthesized strand, that is essential for epigenetic inheritance. Associates with chromatin during G2 and M phases to maintain DNA methylation independently of replication. It is responsible for maintaining methylation patterns established in development. DNA methylation is coordinated with methylation of histones. Mediates transcriptional repression by direct binding to HDAC2. In association with DNMT3B and via the recruitment of CTCFL/BORIS, involved in activation of BAG1 gene expression by modulating dimethylation of promoter histone H3 at H3K4 and H3K9. Probably forms a corepressor complex required for activated KRAS-mediated promoter hypermethylation and transcriptional silencing of tumor suppressor genes (TSGs) or other tumor-related genes in colorectal cancer (CRC) cells. Also required to maintain a transcriptionally repressive state of genes in undifferentiated embryonic stem cells (ESCs). Associates at promoter regions of tumor suppressor genes (TSGs) leading to their gene silencing. Promotes tumor growth. This is DNA (cytosine-5)-methyltransferase 1 (Dnmt1) from Rattus norvegicus (Rat).